The following is a 280-amino-acid chain: Golgi phosphoprotein 3-like (280 aa).

The tract at residues 1–30 (MTTLTRRGRRADVGQENRVDSEDYIKDKDE) is disordered. Basic and acidic residues predominate over residues 10–30 (RADVGQENRVDSEDYIKDKDE). Trp62, Arg71, Arg152, and Arg155 together coordinate a 1,2-diacyl-sn-glycero-3-phospho-(1D-myo-inositol 4-phosphate). A beta-hairpin required for oligomerization region spans residues 171 to 182 (EKQNFLLFDMTT).

The protein belongs to the GOLPH3/VPS74 family. As to quaternary structure, homooligomer.

Its subcellular location is the golgi apparatus. The protein localises to the golgi stack membrane. The protein resides in the trans-Golgi network membrane. Phosphatidylinositol-4-phosphate-binding protein that may play a role in the process of vesicle budding at the Golgi and anterograde transport to the plasma membrane. This is Golgi phosphoprotein 3-like (golph3l) from Xenopus tropicalis (Western clawed frog).